The chain runs to 217 residues: Adenylate kinase (217 aa).

10–15 (GAGKGT) provides a ligand contact to ATP. The NMP stretch occupies residues 30-59 (STGDIFRKNISDKTPLGIEAKEYLDKGQLV). Residues Thr-31, Arg-36, 57–59 (QLV), 85–88 (GFPR), and Gln-92 contribute to the AMP site. The LID stretch occupies residues 126–163 (GRRICPSCGASYHVKFNPPKLKDKCDICNNDIIQRKDD). Arg-127 contributes to the ATP binding site. Residues Cys-130 and Cys-133 each contribute to the Zn(2+) site. 136 to 137 (SY) serves as a coordination point for ATP. Zn(2+)-binding residues include Cys-150 and Cys-153. AMP is bound by residues Arg-160 and Arg-171. An ATP-binding site is contributed by Gly-199.

Belongs to the adenylate kinase family. In terms of assembly, monomer.

It is found in the cytoplasm. It carries out the reaction AMP + ATP = 2 ADP. The protein operates within purine metabolism; AMP biosynthesis via salvage pathway; AMP from ADP: step 1/1. Its function is as follows. Catalyzes the reversible transfer of the terminal phosphate group between ATP and AMP. Plays an important role in cellular energy homeostasis and in adenine nucleotide metabolism. In Clostridium kluyveri (strain NBRC 12016), this protein is Adenylate kinase.